The following is a 286-amino-acid chain: GTP cyclohydrolase 1 type 2 homolog (286 aa).

5 residues coordinate a divalent metal cation: His-66, His-67, Asp-103, His-254, and Glu-258.

Belongs to the GTP cyclohydrolase I type 2/NIF3 family. As to quaternary structure, homohexamer.

The chain is GTP cyclohydrolase 1 type 2 homolog from Treponema pallidum (strain Nichols).